A 130-amino-acid chain; its full sequence is Small ribosomal subunit protein uS8 (130 aa).

The protein belongs to the universal ribosomal protein uS8 family. As to quaternary structure, part of the 30S ribosomal subunit.

In terms of biological role, one of the primary rRNA binding proteins, it binds directly to 16S rRNA central domain where it helps coordinate assembly of the platform of the 30S subunit. The protein is Small ribosomal subunit protein uS8 of Methanococcus maripaludis (strain C5 / ATCC BAA-1333).